Consider the following 93-residue polypeptide: Em protein H5 (93 aa).

The tract at residues 1 to 93 is disordered; the sequence is MASGQQERSE…IDESKFKTKS (93 aa). Composition is skewed to basic and acidic residues over residues 7 to 19, 32 to 62, and 73 to 93; these read ERSE…REGE, EAQE…EMGR, and GGER…KTKS.

This sequence belongs to the small hydrophilic plant seed protein family.

In terms of biological role, it is thought to provide protection for the cytoplasm during the desiccation stage of embryo development. This is Em protein H5 (EMH5) from Triticum aestivum (Wheat).